A 301-amino-acid polypeptide reads, in one-letter code: Phosducin-like protein (301 aa).

Thr2 carries the post-translational modification N-acetylthreonine. The tract at residues 18–57 (SSSEDEDSDHEDKDRGRCAPASSSVPAEAELAGEGISVNT) is disordered. 2 positions are modified to phosphoserine: Ser20 and Ser25. Over residues 36–49 (APASSSVPAEAELA) the composition is skewed to low complexity. Residues 36–299 (APASSSVPAE…TCHSEDSDLE (264 aa)) enclose the Phosducin domain. A phosphoserine mark is found at Ser226, Ser293, and Ser296.

Belongs to the phosducin family. Forms a complex with the beta and gamma subunits of the GTP-binding protein, transducin. Interacts with the CCT chaperonin complex.

The protein resides in the cell projection. The protein localises to the cilium. Acts as a positive regulator of hedgehog signaling and regulates ciliary function. Its function is as follows. Functions as a co-chaperone for CCT in the assembly of heterotrimeric G protein complexes, facilitates the assembly of both Gbeta-Ggamma and RGS-Gbeta5 heterodimers. Functionally, acts as a negative regulator of heterotrimeric G proteins assembly by trapping the preloaded G beta subunits inside the CCT chaperonin. The polypeptide is Phosducin-like protein (PDCL) (Homo sapiens (Human)).